Reading from the N-terminus, the 245-residue chain is Aliphatic sulfonates import ATP-binding protein SsuB 1 (245 aa).

The ABC transporter domain maps to 8–223 (VSITGLRKSF…ERADPDILRY (216 aa)). 40-47 (GPSGTGKT) is an ATP binding site.

The protein belongs to the ABC transporter superfamily. Aliphatic sulfonates importer (TC 3.A.1.17.2) family. In terms of assembly, the complex is composed of two ATP-binding proteins (SsuB), two transmembrane proteins (SsuC) and a solute-binding protein (SsuA).

Its subcellular location is the cell membrane. It catalyses the reaction ATP + H2O + aliphatic sulfonate-[sulfonate-binding protein]Side 1 = ADP + phosphate + aliphatic sulfonateSide 2 + [sulfonate-binding protein]Side 1.. Part of the ABC transporter complex SsuABC involved in aliphatic sulfonates import. Responsible for energy coupling to the transport system. This Nocardia farcinica (strain IFM 10152) protein is Aliphatic sulfonates import ATP-binding protein SsuB 1.